A 300-amino-acid polypeptide reads, in one-letter code: MASPDLSNAYNGRIDLGSLANNASINRALNDMPTAVDDAGVRPQPPIDLTAAAFFDVDNTLVQGSSAVHFGRGLAARDYFTYRDVLGFIYAQAKFQLLGKENSQDVAAGQRKALAFIEGRSVEQLVALGEEIYDEIIADKIWAGTRQLTQIHLDAGQQVWLITATPYELAATIARRLGLTGALGTVAESVDGIFTGRLVDELLHGVGKAHAVRSLAIREGLNLKRCTAYSDSYNDVPMLSLVGTAVAINPDAQLRSLARERGWEIRDFRTARKAARIGVPSALALGGALAAAVSRRRDRE.

Asp56 acts as the Nucleophile in catalysis. 3 residues coordinate Mg(2+): Asp56, Asp58, and Asp231. Catalysis depends on Asp58, which acts as the Proton donor.

It belongs to the HAD-like hydrolase superfamily. SerB family. Requires Mg(2+) as cofactor.

This chain is Putative hydrolase ML2424, found in Mycobacterium leprae (strain TN).